Consider the following 95-residue polypeptide: Putative defensin-like protein 252 (95 aa).

Positions 1 to 27 (MRCVTSFVVLCILMFLVVNNVKVDVKA) are cleaved as a signal peptide. 4 cysteine pairs are disulfide-bonded: Cys34–Cys93, Cys45–Cys72, Cys56–Cys85, and Cys70–Cys87.

The protein belongs to the DEFL family.

It localises to the secreted. The chain is Putative defensin-like protein 252 (SCRL13) from Arabidopsis thaliana (Mouse-ear cress).